A 345-amino-acid polypeptide reads, in one-letter code: Phosphoribosylformylglycinamidine cyclo-ligase (345 aa).

Belongs to the AIR synthase family.

It is found in the cytoplasm. It carries out the reaction 2-formamido-N(1)-(5-O-phospho-beta-D-ribosyl)acetamidine + ATP = 5-amino-1-(5-phospho-beta-D-ribosyl)imidazole + ADP + phosphate + H(+). The protein operates within purine metabolism; IMP biosynthesis via de novo pathway; 5-amino-1-(5-phospho-D-ribosyl)imidazole from N(2)-formyl-N(1)-(5-phospho-D-ribosyl)glycinamide: step 2/2. The polypeptide is Phosphoribosylformylglycinamidine cyclo-ligase (Shewanella oneidensis (strain ATCC 700550 / JCM 31522 / CIP 106686 / LMG 19005 / NCIMB 14063 / MR-1)).